The following is a 429-amino-acid chain: Fez family zinc finger protein 1 (429 aa).

An Engrailed homology 1 repressor motif is present at residues 29-44 (PLAFSIERIMARTPEP). 6 C2H2-type zinc fingers span residues 247 to 269 (FTCE…MPVH), 275 to 297 (FVCK…KIIH), 303 to 325 (HKCN…TRIH), 331 to 353 (FICE…KLTH), 359 to 381 (FKCN…MHTH), and 387 to 410 (FTCP…RKLH). The interval 409 to 429 (LHDISPGPHSPPTPTGNTEGQ) is disordered.

This sequence belongs to the krueppel C2H2-type zinc-finger protein family.

The protein resides in the nucleus. Transcription repressor. Involved in the development of the forebrain region. This chain is Fez family zinc finger protein 1 (fezf1), found in Danio rerio (Zebrafish).